The following is a 349-amino-acid chain: Glycosyltransferase 8 domain-containing protein 2 (349 aa).

Residues 1 to 6 lie on the Cytoplasmic side of the membrane; that stretch reads MAFLRK. A helical; Signal-anchor for type II membrane protein membrane pass occupies residues 7–24; the sequence is VNQVLLLLLVLTLCGILY. Residues 25–349 lie on the Lumenal side of the membrane; that stretch reads KKVHKGAVLK…AGIFKLHHNR (325 aa). The N-linked (GlcNAc...) asparagine glycan is linked to N234.

Belongs to the glycosyltransferase 8 family.

The protein resides in the membrane. This Mus musculus (Mouse) protein is Glycosyltransferase 8 domain-containing protein 2 (Glt8d2).